A 429-amino-acid polypeptide reads, in one-letter code: Glucan 1,3-beta-glucosidase (429 aa).

The signal sequence occupies residues 1-19 (MLSMQVVSLISLLVSVCLA). A propeptide spanning residues 20–27 (QPLPLSKR) is cleaved from the precursor. Glutamate 215 functions as the Proton donor in the catalytic mechanism. Intrachain disulfides connect cysteine 299–cysteine 425 and cysteine 324–cysteine 354. The Nucleophile role is filled by glutamate 316.

Belongs to the glycosyl hydrolase 5 (cellulase A) family.

Its subcellular location is the secreted. It catalyses the reaction Successive hydrolysis of beta-D-glucose units from the non-reducing ends of (1-&gt;3)-beta-D-glucans, releasing alpha-glucose.. In terms of biological role, beta-glucanases participate in the metabolism of beta-glucan, the main structural component of the cell wall. It could also function biosynthetically as a transglycosylase. The chain is Glucan 1,3-beta-glucosidase from Kluyveromyces lactis (strain ATCC 8585 / CBS 2359 / DSM 70799 / NBRC 1267 / NRRL Y-1140 / WM37) (Yeast).